A 317-amino-acid chain; its full sequence is Melanocyte-stimulating hormone receptor (317 aa).

Topologically, residues 1–37 (MAVQGSQRRLLGSLNSTPTAIPQLGLAANQTGARCLE) are extracellular. Asn-29 is a glycosylation site (N-linked (GlcNAc...) asparagine). Residues 38–63 (VSIPDGLFLSLGLVSLVENMLVVATI) traverse the membrane as a helical segment. Topologically, residues 64-72 (AKNRNLHSP) are cytoplasmic. A helical transmembrane segment spans residues 73–93 (MYCFICCLALSDLLVSGSNVL). Residues 94-118 (ETAVILLLEAGALVARAAVLQQVDN) are Extracellular-facing. Residues 119–140 (VIDVITCSSMLSSLCFLGAIAV) traverse the membrane as a helical segment. The Cytoplasmic portion of the chain corresponds to 141-163 (DRYISIFYALRYHSIVTLPRARR). A helical transmembrane segment spans residues 164–183 (AIAAIWVASVLFSTLFIAYC). The Extracellular segment spans residues 184-191 (DHTAVLLC). The helical transmembrane segment at 192-211 (LVVFFLAVLVLMAVLYVHML) threads the bilayer. The Cytoplasmic segment spans residues 212-240 (ARACQHAQGIARLHKRQRPVHQGFGLKGA). A helical membrane pass occupies residues 241–266 (VTLTILLGIFFLCWGPFFLHLTLIVL). Topologically, residues 267–279 (CPEHPTCGCIFKN) are extracellular. Residues 280–300 (FNLFLALIICNAIIDPLIYAF) form a helical membrane-spanning segment. The Cytoplasmic segment spans residues 301-317 (HSQELRRTLKEVLTCSW). Residue Cys-315 is the site of S-palmitoyl cysteine attachment.

The protein belongs to the G-protein coupled receptor 1 family. In terms of assembly, interacts with MGRN1, but does not undergo MGRN1-mediated ubiquitination; this interaction competes with GNAS-binding and thus inhibits agonist-induced cAMP production. Interacts with OPN3; the interaction results in a decrease in MC1R-mediated cAMP signaling and ultimately a decrease in melanin production in melanocytes.

It is found in the cell membrane. Its function is as follows. Receptor for MSH (alpha, beta and gamma) and ACTH. The activity of this receptor is mediated by G proteins which activate adenylate cyclase. Mediates melanogenesis, the production of eumelanin (black/brown) and phaeomelanin (red/yellow), via regulation of cAMP signaling in melanocytes. The sequence is that of Melanocyte-stimulating hormone receptor (MC1R) from Pan troglodytes (Chimpanzee).